The sequence spans 523 residues: Asc-type amino acid transporter 1 (523 aa).

The disordered stretch occupies residues 1 to 28 (MAGHTQQPSGRGNPRPAPSPSPVPGTVP). A compositionally biased stretch (pro residues) spans 15–25 (RPAPSPSPVPG). Helical transmembrane passes span 40–60 (IGLL…GIFI), 72–92 (VGLA…GSLC), 113–133 (IFGG…MYPT), 268–288 (AIFI…IAYF), 310–330 (LLGY…FGGI), 362–382 (CTPI…MLVG), 388–408 (INYV…GLLL), 424–444 (LLIP…SFIS), and 448–468 (VCGV…LGVF). Residues 499 to 523 (APEEEENGPCPPSLLPATDKPSKPQ) are disordered.

It belongs to the amino acid-polyamine-organocation (APC) superfamily. As to quaternary structure, disulfide-linked heterodimer with the amino acid transport protein SLC3A2/4F2hc. Expressed in brain, heart, kidney, liver, lung, pancreas, placenta, and skeletal muscle.

The protein localises to the cell membrane. The catalysed reaction is L-alanine(in) + glycine(out) = L-alanine(out) + glycine(in). It carries out the reaction L-serine(out) + L-alanine(in) = L-serine(in) + L-alanine(out). It catalyses the reaction L-threonine(out) + L-alanine(in) = L-threonine(in) + L-alanine(out). The enzyme catalyses L-cysteine(out) + L-alanine(in) = L-cysteine(in) + L-alanine(out). The catalysed reaction is 2-aminoisobutanoate(out) + L-alanine(in) = 2-aminoisobutanoate(in) + L-alanine(out). It carries out the reaction D-serine(out) + L-alanine(in) = D-serine(in) + L-alanine(out). It catalyses the reaction D-alanine(out) + L-alanine(in) = D-alanine(in) + L-alanine(out). The enzyme catalyses L-valine(out) + L-alanine(in) = L-valine(in) + L-alanine(out). The catalysed reaction is L-methionine(out) + L-alanine(in) = L-methionine(in) + L-alanine(out). It carries out the reaction beta-alanine(out) + L-alanine(in) = beta-alanine(in) + L-alanine(out). It catalyses the reaction D-cysteine(out) + L-alanine(in) = D-cysteine(in) + L-alanine(out). The enzyme catalyses D-threonine(out) + L-alanine(in) = D-threonine(in) + L-alanine(out). The catalysed reaction is D-isoleucine(out) + D-serine(in) = D-isoleucine(in) + D-serine(out). It carries out the reaction D-serine(in) = D-serine(out). In terms of biological role, associates with SLC3A2/4F2hc to form a functional heterodimeric complex that translocates small neutral L- and D-amino acids across the plasma membrane. Preferentially mediates exchange transport, but can also operate via facilitated diffusion. Acts as a major transporter for glycine, L- and D-serine in the central nervous system. At the spinal cord and brainstem regulates glycine metabolism and glycinergic inhibitory neurotransmission by providing for glycine de novo synthesis from L-serine and glycine recycling from astrocytes to glycinergic motor neurons. At Schaffer collateral-CA1 synapses mediates D-serine and glycine release that modulates post-synaptic activation of NMDA receptors and excitatory glutamatergic transmission. May regulate D-serine release from mesenchymal progenitors located in developing subcutaneous adipose tissue, favoring white adipocyte over thermogenic beige adipocyte lineage commitment. This chain is Asc-type amino acid transporter 1 (SLC7A10), found in Homo sapiens (Human).